A 300-amino-acid polypeptide reads, in one-letter code: Ribokinase (300 aa).

Residues 11-13, 39-43, and E139 each bind substrate; these read SMD and GKGAN. Residues N183 and 210–215 each bind ATP; that span reads TLGSEG. 2 residues coordinate K(+): D236 and T238. 241–242 contacts ATP; it reads GD. Residue D242 coordinates substrate. D242 serves as the catalytic Proton acceptor. The K(+) site is built by S272, K275, and G277.

This sequence belongs to the carbohydrate kinase PfkB family. Ribokinase subfamily. In terms of assembly, homodimer. It depends on Mg(2+) as a cofactor.

It is found in the cytoplasm. The catalysed reaction is D-ribose + ATP = D-ribose 5-phosphate + ADP + H(+). Its pathway is carbohydrate metabolism; D-ribose degradation; D-ribose 5-phosphate from beta-D-ribopyranose: step 2/2. Its activity is regulated as follows. Activated by a monovalent cation that binds near, but not in, the active site. The most likely occupant of the site in vivo is potassium. Ion binding induces a conformational change that may alter substrate affinity. Its function is as follows. Catalyzes the phosphorylation of ribose at O-5 in a reaction requiring ATP and magnesium. The resulting D-ribose-5-phosphate can then be used either for sythesis of nucleotides, histidine, and tryptophan, or as a component of the pentose phosphate pathway. This Lactococcus lactis subsp. lactis (strain IL1403) (Streptococcus lactis) protein is Ribokinase.